An 89-amino-acid chain; its full sequence is Large ribosomal subunit protein eL37A (89 aa).

The Zn(2+) site is built by C19, C22, C34, and C37. The segment at 19–37 (CRRCGKRSFHIQKSTCACC) adopts a C4-type zinc-finger fold.

Belongs to the eukaryotic ribosomal protein eL37 family. As to quaternary structure, component of the large ribosomal subunit (LSU). Mature yeast ribosomes consist of a small (40S) and a large (60S) subunit. The 40S small subunit contains 1 molecule of ribosomal RNA (18S rRNA) and at least 33 different proteins. The large 60S subunit contains 3 rRNA molecules (25S, 5.8S and 5S rRNA) and at least 46 different proteins. Requires Zn(2+) as cofactor.

Its subcellular location is the cytoplasm. In terms of biological role, component of the ribosome, a large ribonucleoprotein complex responsible for the synthesis of proteins in the cell. The small ribosomal subunit (SSU) binds messenger RNAs (mRNAs) and translates the encoded message by selecting cognate aminoacyl-transfer RNA (tRNA) molecules. The large subunit (LSU) contains the ribosomal catalytic site termed the peptidyl transferase center (PTC), which catalyzes the formation of peptide bonds, thereby polymerizing the amino acids delivered by tRNAs into a polypeptide chain. The nascent polypeptides leave the ribosome through a tunnel in the LSU and interact with protein factors that function in enzymatic processing, targeting, and the membrane insertion of nascent chains at the exit of the ribosomal tunnel. The polypeptide is Large ribosomal subunit protein eL37A (rpl3703) (Schizosaccharomyces pombe (strain 972 / ATCC 24843) (Fission yeast)).